A 1306-amino-acid polypeptide reads, in one-letter code: DNA-directed RNA polymerase subunit beta' (1306 aa).

Zn(2+) contacts are provided by C214, C285, C292, and C295. Disordered regions lie at residues 1234-1263 and 1281-1306; these read LDNG…PNRL and IARA…DDDK. Over residues 1247 to 1259 the composition is skewed to basic and acidic residues; sequence QGERDNNNSDKKP.

This sequence belongs to the RNA polymerase beta' chain family. RpoC2 subfamily. In cyanobacteria the RNAP catalytic core is composed of 2 alpha, 1 beta, 1 beta', 1 gamma and 1 omega subunit. When a sigma factor is associated with the core the holoenzyme is formed, which can initiate transcription. Zn(2+) serves as cofactor.

The enzyme catalyses RNA(n) + a ribonucleoside 5'-triphosphate = RNA(n+1) + diphosphate. Its function is as follows. DNA-dependent RNA polymerase catalyzes the transcription of DNA into RNA using the four ribonucleoside triphosphates as substrates. The chain is DNA-directed RNA polymerase subunit beta' from Crocosphaera subtropica (strain ATCC 51142 / BH68) (Cyanothece sp. (strain ATCC 51142)).